The following is a 99-amino-acid chain: NADH-quinone oxidoreductase subunit K (99 aa).

The next 3 helical transmembrane spans lie at 3–23 (VTAY…GVLI), 28–48 (IVVF…LVAF), and 59–79 (IAAF…LAII).

The protein belongs to the complex I subunit 4L family. In terms of assembly, NDH-1 is composed of 14 different subunits. Subunits NuoA, H, J, K, L, M, N constitute the membrane sector of the complex.

It localises to the cell membrane. The enzyme catalyses a quinone + NADH + 5 H(+)(in) = a quinol + NAD(+) + 4 H(+)(out). Functionally, NDH-1 shuttles electrons from NADH, via FMN and iron-sulfur (Fe-S) centers, to quinones in the respiratory chain. The immediate electron acceptor for the enzyme in this species is believed to be a menaquinone. Couples the redox reaction to proton translocation (for every two electrons transferred, four hydrogen ions are translocated across the cytoplasmic membrane), and thus conserves the redox energy in a proton gradient. The protein is NADH-quinone oxidoreductase subunit K of Nocardioides sp. (strain ATCC BAA-499 / JS614).